A 361-amino-acid polypeptide reads, in one-letter code: Phosphoserine aminotransferase (361 aa).

Arginine 42 is a binding site for L-glutamate. Pyridoxal 5'-phosphate is bound by residues 76–77, tryptophan 102, threonine 153, aspartate 173, and glutamine 196; that span reads AR. An N6-(pyridoxal phosphate)lysine modification is found at lysine 197. 238–239 lines the pyridoxal 5'-phosphate pocket; that stretch reads NT.

This sequence belongs to the class-V pyridoxal-phosphate-dependent aminotransferase family. SerC subfamily. In terms of assembly, homodimer. Pyridoxal 5'-phosphate is required as a cofactor.

The protein localises to the cytoplasm. It carries out the reaction O-phospho-L-serine + 2-oxoglutarate = 3-phosphooxypyruvate + L-glutamate. It catalyses the reaction 4-(phosphooxy)-L-threonine + 2-oxoglutarate = (R)-3-hydroxy-2-oxo-4-phosphooxybutanoate + L-glutamate. It participates in amino-acid biosynthesis; L-serine biosynthesis; L-serine from 3-phospho-D-glycerate: step 2/3. The protein operates within cofactor biosynthesis; pyridoxine 5'-phosphate biosynthesis; pyridoxine 5'-phosphate from D-erythrose 4-phosphate: step 3/5. Functionally, catalyzes the reversible conversion of 3-phosphohydroxypyruvate to phosphoserine and of 3-hydroxy-2-oxo-4-phosphonooxybutanoate to phosphohydroxythreonine. The protein is Phosphoserine aminotransferase of Yersinia pestis bv. Antiqua (strain Angola).